The following is a 388-amino-acid chain: Na(+)/H(+) antiporter NhaA (388 aa).

A run of 11 helical transmembrane segments spans residues G14–T34, M59–V79, V95–F115, G125–G145, I154–F174, L179–L199, V219–L239, I254–V274, I292–L312, I328–L348, and A356–G376.

Belongs to the NhaA Na(+)/H(+) (TC 2.A.33) antiporter family.

It localises to the cell inner membrane. It catalyses the reaction Na(+)(in) + 2 H(+)(out) = Na(+)(out) + 2 H(+)(in). Na(+)/H(+) antiporter that extrudes sodium in exchange for external protons. This is Na(+)/H(+) antiporter NhaA from Salmonella arizonae (strain ATCC BAA-731 / CDC346-86 / RSK2980).